Reading from the N-terminus, the 277-residue chain is Outer membrane lipoprotein 1 (277 aa).

The N-terminal stretch at 1-19 (MSFKKILGVALVSALALTA) is a signal peptide. Cysteine 20 carries N-palmitoyl cysteine lipidation. Cysteine 20 is lipidated: S-diacylglycerol cysteine.

Belongs to the NlpA lipoprotein family.

The protein resides in the cell outer membrane. In Mannheimia haemolytica (Pasteurella haemolytica), this protein is Outer membrane lipoprotein 1 (plpA).